The following is a 221-amino-acid chain: ATP-dependent dethiobiotin synthetase BioD (221 aa).

An ATP-binding site is contributed by 13 to 18; sequence DIGKTY. T17 provides a ligand contact to Mg(2+). The active site involves K38. S42 is a substrate binding site. Residues D51, 112–115, and 176–177 each bind ATP; these read EGSG and NR. Positions 51 and 112 each coordinate Mg(2+).

It belongs to the dethiobiotin synthetase family. As to quaternary structure, homodimer. Mg(2+) serves as cofactor.

The protein resides in the cytoplasm. It catalyses the reaction (7R,8S)-7,8-diammoniononanoate + CO2 + ATP = (4R,5S)-dethiobiotin + ADP + phosphate + 3 H(+). Its pathway is cofactor biosynthesis; biotin biosynthesis; biotin from 7,8-diaminononanoate: step 1/2. Functionally, catalyzes a mechanistically unusual reaction, the ATP-dependent insertion of CO2 between the N7 and N8 nitrogen atoms of 7,8-diaminopelargonic acid (DAPA, also called 7,8-diammoniononanoate) to form a ureido ring. This chain is ATP-dependent dethiobiotin synthetase BioD, found in Brachyspira hyodysenteriae (strain ATCC 49526 / WA1).